Reading from the N-terminus, the 1171-residue chain is ATP-dependent helicase/deoxyribonuclease subunit B (1171 aa).

The 343-residue stretch at 1-343 folds into the UvrD-like helicase ATP-binding domain; it reads MSLRFVIGRA…LVADENYRYR (343 aa). 8 to 15 is a binding site for ATP; it reads GRAGSGKS. The UvrD-like helicase C-terminal domain maps to 281 to 587; the sequence is MEQPRFHSPA…QFANIPPSLD (307 aa). 4 residues coordinate [4Fe-4S] cluster: C805, C1129, C1132, and C1138.

Belongs to the helicase family. AddB/RexB type 1 subfamily. In terms of assembly, heterodimer of AddA and AddB. Mg(2+) serves as cofactor. It depends on [4Fe-4S] cluster as a cofactor.

Functionally, the heterodimer acts as both an ATP-dependent DNA helicase and an ATP-dependent, dual-direction single-stranded exonuclease. Recognizes the chi site generating a DNA molecule suitable for the initiation of homologous recombination. The AddB subunit has 5' -&gt; 3' nuclease activity but not helicase activity. The polypeptide is ATP-dependent helicase/deoxyribonuclease subunit B (Bacillus cereus (strain AH187)).